The chain runs to 416 residues: MLRWLTAGESHGEALVGIVEGVPAGVELTTGMVQDALARRRLGYGRGARMKFEQDRVRILGGVRHGLTQGGPVAIEIANTEWPKWQDVMSSDPVDPQVLEGRARNAPLTRPRPGHADLTGMQKYGFDEARPVLERASARETATRVALGVVASQILAALGVRLVSHTTAVAEVAVPEGAPLPGPQDVPALDADPLRCFDAETSAAMVAAVDAAHKAGETLGGVVEVLAEGMPPGLGSYVHWDRRLDSRLAGALMGIQAIKGVEVGDGFRTAQRPGSLAHDETLRADGSVHRVSNRAGGIEGGMSTGDLLRVRAAMKPIATVPRSLHTVDVATGEPARAHHQRSDVCAVPAAGVVAEAMVALVLAEAALEKFGGDSVAELVRNRDSYLAGIPESLRTSPELADPAALAALDEVRGDLS.

Residues R40 and R46 each coordinate NADP(+). FMN-binding positions include 135–137, 256–257, G300, 315–319, and R341; these read RAS, QA, and KPIAT.

This sequence belongs to the chorismate synthase family. In terms of assembly, homotetramer. FMNH2 is required as a cofactor.

It catalyses the reaction 5-O-(1-carboxyvinyl)-3-phosphoshikimate = chorismate + phosphate. The protein operates within metabolic intermediate biosynthesis; chorismate biosynthesis; chorismate from D-erythrose 4-phosphate and phosphoenolpyruvate: step 7/7. Its function is as follows. Catalyzes the anti-1,4-elimination of the C-3 phosphate and the C-6 proR hydrogen from 5-enolpyruvylshikimate-3-phosphate (EPSP) to yield chorismate, which is the branch point compound that serves as the starting substrate for the three terminal pathways of aromatic amino acid biosynthesis. This reaction introduces a second double bond into the aromatic ring system. The sequence is that of Chorismate synthase from Kocuria rhizophila (strain ATCC 9341 / DSM 348 / NBRC 103217 / DC2201).